Reading from the N-terminus, the 1657-residue chain is Endoribonuclease Dicer homolog 4 (1657 aa).

Over residues 1–14 (MGDAAAAAPAAAAA) the composition is skewed to low complexity. Residues 1–26 (MGDAAAAAPAAAAAGPSSTRGEPKDP) form a disordered region. Residues 37–214 (LCKRAVEENI…SHSFTEKGGR (178 aa)) enclose the Helicase ATP-binding domain. 50-57 (LGTGCGKT) is a binding site for ATP. A DECH box motif is present at residues 157–160 (DECH). In terms of domain architecture, Helicase C-terminal spans 400–567 (NKFSVLINVL…TSNDMFDCLE (168 aa)). One can recognise a Dicer dsRNA-binding fold domain in the interval 585-675 (SVSLLHCYCD…LPGPGSRKNK (91 aa)). Residues 856–978 (DVSVHASYSS…LPPELCSLKV (123 aa)) form the PAZ domain. RNase III domains follow at residues 1010 to 1173 (DVML…VEGG) and 1214 to 1358 (IAGL…LDSG). Residues Glu1252, Asp1344, and Glu1347 each contribute to the Mg(2+) site. The region spanning 1384-1451 (NPMRELRELC…AQETLSKLKN (68 aa)) is the DRBM 1 domain. The disordered stretch occupies residues 1525-1556 (GSGKHDVNNGRNNQPKLATQSGRLPSEATEKS). Polar residues predominate over residues 1533-1547 (NGRNNQPKLATQSGR). The region spanning 1569 to 1645 (TARSFLFELC…AQGALWCLKQ (77 aa)) is the DRBM 2 domain.

This sequence belongs to the helicase family. Dicer subfamily. In terms of assembly, may interact with ARGONAUTE1 or PINHEAD through their common PAZ domains. The cofactor is Mg(2+). Mn(2+) is required as a cofactor. As to expression, expressed in roots, leaf blades, leaf sheaths, shoot apices and spikelets.

The protein localises to the nucleus. Involved in the RNA silencing pathway. Cleaves double-stranded RNA to produce small interfering RNAs (siRNAs) which target the selective destruction of complementary RNAs. Required for the production of 21 nucleotide siRNAs. Regulates shoot apical meristem (SAM) initiation and maintenance, leaf polarization and lemma polarity through the trans-acting siRNAS (ta-siRNAs) pathway, which probably modulate the expression of the ARF2, ARF3, ARF4, ARF14 and ARF15 genes. Can process endogenous 21 nucleotide siRNAs derived from an imperfect inverted repeat. May not be involved in microRNAs (miRNAs) production. The sequence is that of Endoribonuclease Dicer homolog 4 (DCL4) from Oryza sativa subsp. japonica (Rice).